Consider the following 326-residue polypeptide: 5-dehydro-2-deoxygluconokinase (326 aa).

The protein belongs to the carbohydrate kinase PfkB family.

It catalyses the reaction 5-dehydro-2-deoxy-D-gluconate + ATP = 6-phospho-5-dehydro-2-deoxy-D-gluconate + ADP + H(+). The protein operates within polyol metabolism; myo-inositol degradation into acetyl-CoA; acetyl-CoA from myo-inositol: step 5/7. Catalyzes the phosphorylation of 5-dehydro-2-deoxy-D-gluconate (2-deoxy-5-keto-D-gluconate or DKG) to 6-phospho-5-dehydro-2-deoxy-D-gluconate (DKGP). This chain is 5-dehydro-2-deoxygluconokinase, found in Lacticaseibacillus casei (Lactobacillus casei).